A 75-amino-acid chain; its full sequence is U-stichotoxin-Hau3a (75 aa).

A signal peptide spans 1–19; the sequence is MNHLIILVVAAVFLGMASA. A propeptide spanning residues 20–26 is cleaved from the precursor; that stretch reads EDVFHKR. Intrachain disulfides connect C31/C71, C33/C61, and C54/C72.

The protein belongs to the sea anemone sodium channel inhibitory toxin family. Type I subfamily. In terms of processing, contains 3 disulfide bonds.

It localises to the secreted. The protein resides in the nematocyst. Toxin that is lethal to crab. The chain is U-stichotoxin-Hau3a from Heteractis aurora (Banded sea anemone).